Here is a 414-residue protein sequence, read N- to C-terminus: Serine/threonine transporter SstT (414 aa).

At 2–15 (TTQHSPGLFRRLAH) the chain is on the cytoplasmic side. Residues 16–36 (GSLVKQILAGLILGILLAWIS) traverse the membrane as a helical segment. The Periplasmic portion of the chain corresponds to 37-45 (KPAAEAVGL). A helical membrane pass occupies residues 46-66 (LGTLFVGALKAVAPILVLMLV). At 67-83 (MASIANHQHGQKTNIRP) the chain is on the cytoplasmic side. A helical membrane pass occupies residues 84–104 (ILFLYLLGTFSAALAAVIFSF). Over 105–142 (AFPSTLHLSSSAGDISPPSGIVEVMRGLVMSMVSNPID) the chain is Periplasmic. The chain crosses the membrane as a helical span at residues 143–163 (ALLKGNYIGILVWAIGLGFAL). The Cytoplasmic portion of the chain corresponds to 164–179 (RHGNETTKNLVNDMSN). The helical transmembrane segment at 180–200 (AVTFMVKLVIHFAPIGIFGLV) threads the bilayer. Topologically, residues 201–217 (SSTLATTGFSTLWGYAQ) are periplasmic. A helical transmembrane segment spans residues 218–238 (LLVVLVGCMLLVALVVNPLLV). Over 239–299 (WWKIRRNPFP…VSIPLGATIN (61 aa)) the chain is Cytoplasmic. The helical transmembrane segment at 300 to 320 (MAGAAITITVLTLAAVNTLGI) threads the bilayer. Topologically, residues 321-331 (PVDLPTALLLS) are periplasmic. A helical membrane pass occupies residues 332-352 (VVASLCACGASGVAGGSLLLI). Residues 353–414 (PLACNMFGIS…DRLANSALRN (62 aa)) are Cytoplasmic-facing.

It belongs to the dicarboxylate/amino acid:cation symporter (DAACS) (TC 2.A.23) family.

It localises to the cell inner membrane. The catalysed reaction is L-serine(in) + Na(+)(in) = L-serine(out) + Na(+)(out). The enzyme catalyses L-threonine(in) + Na(+)(in) = L-threonine(out) + Na(+)(out). Its function is as follows. Involved in the import of serine and threonine into the cell, with the concomitant import of sodium (symport system). This Escherichia coli (strain UTI89 / UPEC) protein is Serine/threonine transporter SstT.